The chain runs to 340 residues: Ketol-acid reductoisomerase (NADP(+)) (340 aa).

In terms of domain architecture, KARI N-terminal Rossmann spans 5-182 (MEYEKDVKVA…GSARVGLLET (178 aa)). NADP(+) contacts are provided by residues 26–29 (YGSQ), Arg49, Ser53, and 83–86 (DEIQ). His108 is a catalytic residue. An NADP(+)-binding site is contributed by Gly134. The KARI C-terminal knotted domain occupies 183–328 (TYKEETEEDL…AELRKAMPFV (146 aa)). Positions 191, 195, 227, and 231 each coordinate Mg(2+). Ser252 contributes to the substrate binding site.

This sequence belongs to the ketol-acid reductoisomerase family. It depends on Mg(2+) as a cofactor.

It catalyses the reaction (2R)-2,3-dihydroxy-3-methylbutanoate + NADP(+) = (2S)-2-acetolactate + NADPH + H(+). The catalysed reaction is (2R,3R)-2,3-dihydroxy-3-methylpentanoate + NADP(+) = (S)-2-ethyl-2-hydroxy-3-oxobutanoate + NADPH + H(+). The protein operates within amino-acid biosynthesis; L-isoleucine biosynthesis; L-isoleucine from 2-oxobutanoate: step 2/4. It functions in the pathway amino-acid biosynthesis; L-valine biosynthesis; L-valine from pyruvate: step 2/4. Its function is as follows. Involved in the biosynthesis of branched-chain amino acids (BCAA). Catalyzes an alkyl-migration followed by a ketol-acid reduction of (S)-2-acetolactate (S2AL) to yield (R)-2,3-dihydroxy-isovalerate. In the isomerase reaction, S2AL is rearranged via a Mg-dependent methyl migration to produce 3-hydroxy-3-methyl-2-ketobutyrate (HMKB). In the reductase reaction, this 2-ketoacid undergoes a metal-dependent reduction by NADPH to yield (R)-2,3-dihydroxy-isovalerate. The sequence is that of Ketol-acid reductoisomerase (NADP(+)) from Streptococcus sanguinis (strain SK36).